The sequence spans 1004 residues: Centriolar coiled-coil protein of 110 kDa (1004 aa).

The tract at residues 1 to 221 is CEP97 binding; it reads MEEYEEFCEK…SCLAEVTPDP (221 aa). A coiled-coil region spans residues 51–90; the sequence is EKRKKIQEEKQKALDVQSRKQANRKKALLTRVQEILENVQ. The tract at residues 64–82 is calmodulin-binding; the sequence is LDVQSRKQANRKKALLTRV. The tract at residues 67 to 82 is required for interaction with CEP290; that stretch reads QSRKQANRKKALLTRV. Disordered stretches follow at residues 147–194 and 239–279; these read PVNN…SSAS and RELS…APPM. A Phosphoserine modification is found at Ser170. Residues 243-252 show a composition bias toward low complexity; that stretch reads SRSLRNSLKR. Residues 253–276 are compositionally biased toward basic and acidic residues; that stretch reads SVNETHSDRENDAAKASDCVKEKA. The segment at 349-564 is interaction with CEP76; the sequence is ENKVKSLKGP…QTQTSRQQMD (216 aa). Residues Ser364, Ser370, and Ser398 each carry the phosphoserine modification. A disordered region spans residues 401–433; sequence GKEEAVDRTAPAAAETTNESETVPKSPTDLTGV. A compositionally biased stretch (polar residues) spans 415-433; it reads ETTNESETVPKSPTDLTGV. Ser550 is modified (phosphoserine). Residues 641–699 adopt a coiled-coil conformation; sequence QELLKSKMLAFEEMRKRLEEQHAQQLSLLIAEQEREQEQLQKEIEEQEKMLKEKAVTTD. Calmodulin-binding stretches follow at residues 773-813 and 901-916; these read GRAQ…DKLK and VALSVATQKSLDRKKF. Residues 955–1004 form a disordered region; it reads LSRQGTPKTSVKGVVQNRQKPSQSRVPNRAPVSGAYAGKTQRKRPNVATI. Polar residues predominate over residues 970–980; the sequence is QNRQKPSQSRV. Residues 994-1004 are compositionally biased toward basic residues; that stretch reads TQRKRPNVATI.

Interacts with CALM1, CETN2, CEP76, CEP104, CEP290 and TALPID3. Interacts with CEP97. Seems to associate with discrete CETN2, CEP97 and CEP290-containing complexes. Interacts with NEURL4 and CCNF; these interactions are not mutually exclusive and both lead to CCP110 ubiquitination and proteasome-dependent degradation. Via its interaction with NEURL4, may indirectly interact with HERC2. Interacts with KIF24, leading to its recruitment to centrioles. Interacts with USP20 and USP33. Interacts with MPHOSPH9. Interacts (via N-terminal region) with ENKD1 (via central region); ENKD1 competes with CEP97 for binding to CCP110, destabilizing the interaction between CP110 and CEP97 which promotes the removal of CCP110 and CEP97 from the mother centriole and allows the initiation of ciliogenesis. Phosphorylated by CDKs. In terms of processing, ubiquitinated by the SCF(CCNF) during G2 phase, leading to its degradation by the proteasome and preventing centrosome reduplication. Deubiquitinated by USP33 in S and G2/M phase, leading to stabilize CCP110 during the period which centrioles duplicate and elongate. Ubiquitinated by the EDVP complex, leading to its degradation.

It is found in the cytoplasm. The protein resides in the cytoskeleton. The protein localises to the microtubule organizing center. It localises to the centrosome. Its subcellular location is the centriole. It is found in the cilium basal body. In terms of biological role, necessary for centrosome duplication at different stages of procentriole formation. Acts as a key negative regulator of ciliogenesis in collaboration with CEP97 by capping the mother centriole thereby preventing cilia formation. Also involved in promoting ciliogenesis. May play a role in the assembly of the mother centriole subdistal appendages (SDA) thereby effecting the fusion of recycling endosomes to basal bodies during cilia formation. Required for correct spindle formation and has a role in regulating cytokinesis and genome stability via cooperation with CALM1 and CETN2. This is Centriolar coiled-coil protein of 110 kDa (Ccp110) from Mus musculus (Mouse).